Consider the following 373-residue polypeptide: Forkhead box protein F1 (373 aa).

A disordered region spans residues methionine 1–arginine 51. A compositionally biased stretch (low complexity) spans proline 13–alanine 22. A DNA-binding region (fork-head) is located at residues lysine 54–arginine 148. Disordered regions lie at residues glycine 236–glycine 255 and glutamine 283–glutamine 306. Over residues serine 286 to glutamine 306 the composition is skewed to low complexity.

It localises to the nucleus. Its function is as follows. Probable transcription factor. Required for smooth muscle (visceral mesoderm) differentiation during gut development. Also required for normal proliferation of the lateral plate mesoderm. Acts as a downstream mediator of bmp4-signaling. In Xenopus tropicalis (Western clawed frog), this protein is Forkhead box protein F1.